An 874-amino-acid polypeptide reads, in one-letter code: Alanine--tRNA ligase (874 aa).

Zn(2+) is bound by residues H562, H566, C664, and H668.

It belongs to the class-II aminoacyl-tRNA synthetase family. The cofactor is Zn(2+).

The protein localises to the cytoplasm. It carries out the reaction tRNA(Ala) + L-alanine + ATP = L-alanyl-tRNA(Ala) + AMP + diphosphate. Catalyzes the attachment of alanine to tRNA(Ala) in a two-step reaction: alanine is first activated by ATP to form Ala-AMP and then transferred to the acceptor end of tRNA(Ala). Also edits incorrectly charged Ser-tRNA(Ala) and Gly-tRNA(Ala) via its editing domain. This Shewanella sp. (strain MR-7) protein is Alanine--tRNA ligase.